We begin with the raw amino-acid sequence, 414 residues long: 3-phosphoshikimate 1-carboxyvinyltransferase (414 aa).

The 3-phosphoshikimate site is built by lysine 20, serine 21, and arginine 25. Lysine 20 contributes to the phosphoenolpyruvate binding site. Residues glycine 85 and arginine 113 each coordinate phosphoenolpyruvate. Serine 154, serine 155, glutamine 156, serine 181, aspartate 296, and lysine 323 together coordinate 3-phosphoshikimate. Glutamine 156 serves as a coordination point for phosphoenolpyruvate. Aspartate 296 (proton acceptor) is an active-site residue. Residues arginine 327, arginine 371, and lysine 395 each coordinate phosphoenolpyruvate.

This sequence belongs to the EPSP synthase family. As to quaternary structure, monomer.

Its subcellular location is the cytoplasm. The catalysed reaction is 3-phosphoshikimate + phosphoenolpyruvate = 5-O-(1-carboxyvinyl)-3-phosphoshikimate + phosphate. It functions in the pathway metabolic intermediate biosynthesis; chorismate biosynthesis. Its function is as follows. Catalyzes the transfer of the enolpyruvyl moiety of phosphoenolpyruvate (PEP) to the 5-hydroxyl of shikimate-3-phosphate (S3P) to produce enolpyruvyl shikimate-3-phosphate and inorganic phosphate. The chain is 3-phosphoshikimate 1-carboxyvinyltransferase from Saccharolobus islandicus (strain M.14.25 / Kamchatka #1) (Sulfolobus islandicus).